We begin with the raw amino-acid sequence, 510 residues long: RNA-splicing ligase RtcB homolog (510 aa).

Mn(2+) contacts are provided by D124, C127, H232, H264, and H358. 231 to 235 (NHYAE) provides a ligand contact to GMP. Residues 358 to 359 (HN), 407 to 410 (GGTM), S414, 433 to 436 (HGAG), and K509 contribute to the GMP site. H433 functions as the GMP-histidine intermediate in the catalytic mechanism.

This sequence belongs to the RtcB family. In terms of assembly, catalytic component of the tRNA-splicing ligase complex. The cofactor is Mn(2+).

The catalysed reaction is a 3'-end 3'-phospho-ribonucleotide-RNA + a 5'-end dephospho-ribonucleoside-RNA + GTP = a ribonucleotidyl-ribonucleotide-RNA + GMP + diphosphate. It carries out the reaction a 3'-end 2',3'-cyclophospho-ribonucleotide-RNA + a 5'-end dephospho-ribonucleoside-RNA + GTP + H2O = a ribonucleotidyl-ribonucleotide-RNA + GMP + diphosphate + H(+). In terms of biological role, catalytic subunit of the tRNA-splicing ligase complex that acts by directly joining spliced tRNA halves to mature-sized tRNAs by incorporating the precursor-derived splice junction phosphate into the mature tRNA as a canonical 3',5'-phosphodiester. May act as an RNA ligase with broad substrate specificity, and may function toward other RNAs. The polypeptide is RNA-splicing ligase RtcB homolog (Trichoplax adhaerens (Trichoplax reptans)).